Here is a 443-residue protein sequence, read N- to C-terminus: Histone deacetylase 10, chloroplastic (443 aa).

The transit peptide at 1-65 (MEQLWVPSLP…PSHNGTSISD (65 aa)) directs the protein to the chloroplast. The segment at 82-412 (DAHILYCTSP…FRAFLGEPSL (331 aa)) is histone deacetylase. The active-site Proton donor/acceptor is the histidine 222. The Zn(2+) site is built by aspartate 259, histidine 261, and aspartate 346.

The protein belongs to the histone deacetylase family. Requires Zn(2+) as cofactor. In terms of tissue distribution, expressed in leaves. Expressed in coleoptiles, leaves, flag leaves and flowers. Expressed at low levels in roots.

The protein localises to the plastid. Its subcellular location is the chloroplast. The protein resides in the mitochondrion. It carries out the reaction N-acetylserotonin + H2O = serotonin + acetate. The catalysed reaction is N-acetyltyramine + H2O = tyramine + acetate. It catalyses the reaction N-acetyltryptamine + H2O = tryptamine + acetate. The enzyme catalyses melatonin + H2O = 5-methoxytryptamine + acetate. Its activity is regulated as follows. The activity of this enzyme is not inhibited by butyrate, a well-known histone deacetylase inhibitor. In terms of biological role, involved in the regulation of melatonin biosynthesis by catalyzing the deacetylation of N-acetylserotonin to produce serotonin. N-acetylserotonin is methylated by acetylserotonin O-methyltransferase (ASMT) to produce melatonin (N-acetyl-5-methoxytryptamine). Deacetylates melatonin to produce 5-methoxytryptamine. In vitro, deacetylates N-acetyltyramine and N-acetyltryptamine to produce tyramine and tryptamine, respectively. The polypeptide is Histone deacetylase 10, chloroplastic (Oryza sativa subsp. japonica (Rice)).